The sequence spans 430 residues: Maltoporin (430 aa).

Positions 1-23 (MNNKKTLLAVAISGMMFATSAAA) are cleaved as a signal peptide.

Belongs to the porin LamB (TC 1.B.3) family. In terms of assembly, homotrimer formed of three 18-stranded antiparallel beta-barrels, containing three independent channels.

It localises to the cell outer membrane. It carries out the reaction beta-maltose(in) = beta-maltose(out). Its function is as follows. Involved in the transport of maltose and maltodextrins. In Actinobacillus succinogenes (strain ATCC 55618 / DSM 22257 / CCUG 43843 / 130Z), this protein is Maltoporin.